The chain runs to 437 residues: UDP-N-acetylmuramoylalanine--D-glutamate ligase (437 aa).

Position 115-121 (115-121 (GSNGKST)) interacts with ATP.

This sequence belongs to the MurCDEF family.

The protein resides in the cytoplasm. The enzyme catalyses UDP-N-acetyl-alpha-D-muramoyl-L-alanine + D-glutamate + ATP = UDP-N-acetyl-alpha-D-muramoyl-L-alanyl-D-glutamate + ADP + phosphate + H(+). It functions in the pathway cell wall biogenesis; peptidoglycan biosynthesis. Cell wall formation. Catalyzes the addition of glutamate to the nucleotide precursor UDP-N-acetylmuramoyl-L-alanine (UMA). The protein is UDP-N-acetylmuramoylalanine--D-glutamate ligase of Vibrio campbellii (strain ATCC BAA-1116).